Here is a 91-residue protein sequence, read N- to C-terminus: Long neurotoxin OH-37 (91 aa).

Residues 1–21 (MKTLLLTLVVMTIVCLDLGYS) form the signal peptide. Disulfide bonds link C24-C41, C34-C62, C47-C51, C66-C77, and C78-C83.

Belongs to the three-finger toxin family. Long-chain subfamily. Type II alpha-neurotoxin sub-subfamily. Expressed by the venom gland.

The protein resides in the secreted. Functionally, binds with high affinity to muscular (alpha-1/CHRNA1) and neuronal (alpha-7/CHRNA7) nicotinic acetylcholine receptor (nAChR) and inhibits acetylcholine from binding to the receptor, thereby impairing neuromuscular and neuronal transmission. The protein is Long neurotoxin OH-37 of Ophiophagus hannah (King cobra).